Reading from the N-terminus, the 244-residue chain is MKHSDVAVIIPSRLSSTRLKQKPLQLIGSITLIERVFKQVSQANLEHTYVTTDSEEIAKIIKKVGGKVIFTNSNIPTGTDRTYEAFKLIPNNQNINYIVNVQGDMPFIEPSSILKIIEYLKNSEYDIVTPVVKVDKESVEAASNVTVAVNSAGKALYFSRSLIPNGAEEFLYHVGIYGFCKSALEKFISIKPTFLEKTERLEQLRILENNIAIGTCLVNNVPISVDTEEDLQKAIKFYENISKL.

It belongs to the KdsB family.

Its subcellular location is the cytoplasm. The enzyme catalyses 3-deoxy-alpha-D-manno-oct-2-ulosonate + CTP = CMP-3-deoxy-beta-D-manno-octulosonate + diphosphate. Its pathway is nucleotide-sugar biosynthesis; CMP-3-deoxy-D-manno-octulosonate biosynthesis; CMP-3-deoxy-D-manno-octulosonate from 3-deoxy-D-manno-octulosonate and CTP: step 1/1. The protein operates within bacterial outer membrane biogenesis; lipopolysaccharide biosynthesis. In terms of biological role, activates KDO (a required 8-carbon sugar) for incorporation into bacterial lipopolysaccharide in Gram-negative bacteria. The chain is 3-deoxy-manno-octulosonate cytidylyltransferase from Rickettsia canadensis (strain McKiel).